The following is a 201-amino-acid chain: Recombination protein RecR (201 aa).

Residues 57-72 form a C4-type zinc finger; that stretch reads CADCRTFTEQEHCTIC. The Toprim domain occupies 81 to 176; sequence GQICVVESPA…LASRIAHGVP (96 aa).

It belongs to the RecR family.

May play a role in DNA repair. It seems to be involved in an RecBC-independent recombinational process of DNA repair. It may act with RecF and RecO. The protein is Recombination protein RecR of Yersinia enterocolitica serotype O:8 / biotype 1B (strain NCTC 13174 / 8081).